The sequence spans 1514 residues: Neurexin-1 (1514 aa).

Positions 1-30 (MGTALVQRGGCCLLCLSLLLLGCWAELGSG) are cleaved as a signal peptide. The Laminin G-like 1 domain occupies 31–217 (LEFPGAEGQW…PPNSGGGSPC (187 aa)). The Extracellular portion of the chain corresponds to 31-1438 (LEFPGAEGQW…EVIRESSSTT (1408 aa)). Residues N125 and N190 are each glycosylated (N-linked (GlcNAc...) asparagine). The disordered stretch occupies residues 197–221 (VDGGEVKLDDEPPNSGGGSPCEAGE). In terms of domain architecture, EGF-like 1 spans 219-256 (AGEEGEGGVCLNGGVCSVVDDQAVCDCSRTGFRGKDCS). Cystine bridges form between C228–C243 and C245–C255. Laminin G-like domains lie at 283-480 (IATF…AFKC) and 487-679 (DPIT…KPSC). Ca(2+) is bound by residues D329, L346, and M414. Intrachain disulfides connect C444–C480, C650–C679, C687–C698, C692–C707, and C709–C719. An EGF-like 2 domain is found at 683 to 720 (TAKPCLSNPCKNNGMCRDGWNRYVCDCSGTGYLGRSCE). Laminin G-like domains follow at residues 725–898 (VLSY…IDYC) and 912–1087 (DPVT…ERGC). Ca(2+)-binding residues include D772 and L789. N797 carries an N-linked (GlcNAc...) asparagine glycan. R848 serves as a coordination point for Ca(2+). 5 cysteine pairs are disulfide-bonded: C890–C898, C1059–C1087, C1094–C1105, C1099–C1114, and C1116–C1126. An EGF-like 3 domain is found at 1090-1127 (PSTTCQEDSCSNQGVCLQQWDGFSCDCSMTSFSGPLCN). Residues 1133–1331 (YIFSKGGGQI…DANIAIVGNV (199 aa)) form the Laminin G-like 6 domain. Ca(2+) is bound by residues D1183 and V1200. The N-linked (GlcNAc...) asparagine glycan is linked to N1230. 2 residues coordinate Ca(2+): I1282 and N1284. O-linked (Xyl...) (heparan sulfate) serine glycosylation occurs at S1392. The tract at residues 1396–1427 (PSDDEDIDPCEPSSGGLANPTRVGGREPYPGS) is disordered. Residues 1439 to 1459 (GMVVGIVAAAALCILILLYAM) traverse the membrane as a helical segment. Residues 1460 to 1514 (YKYRNRDEGSYHVDESRNYISNSAQSNGAVVKEKQPSSAKSANKNKKNKDKEYYV) are Cytoplasmic-facing. An interaction with CASK region spans residues 1481–1507 (NSAQSNGAVVKEKQPSSAKSANKNKKN). The interval 1481–1514 (NSAQSNGAVVKEKQPSSAKSANKNKKNKDKEYYV) is disordered.

Belongs to the neurexin family. In terms of assembly, interacts (via laminin G-like domain 2 and/or laminin G-like domain 6) with NLGN1 forming a heterotetramer, where one NLGN1 dimer interacts with one NRXN1 dimer. Also interacts (via laminin G-like domain 2 and/or laminin G-like domain 6) with NLGN2, NLGN3 and NLGN4L; interactions with NLGN1, NLGN2, NLGN3 and NLGN4L are calcium-dependent. Interacts (via cytoplasmic C-terminal region) with CASK (via the PDZ, SH3 and guanylate kinase-like domains). Interacts (via cytoplasmic C-terminus) with CASKIN1 and APBA1. Interacts (via laminin G-like domain 2) with NXPH1 and NXPH3. Alpha-type isoforms (neurexin-1-alpha) interact (via laminin G-like domain 2 and/or laminin G-like domain 6) with DAG1 (via alpha-dystroglycan chain). Interacts with LRRTM1, LRRTM2, LRRTM3 and LRRTM4. Interacts with SYT13 and SYTL1. Interacts with CBLN1, CBLN2 and, less avidly, with CBLN4. Interacts with CLSTN3. In terms of processing, O-glycosylated; contains heparan sulfate. Heparan sulfate attachment is required for synapse development by mediating interactions with neuroligins and LRRTM2.

The protein localises to the presynaptic cell membrane. Functionally, cell surface protein involved in cell-cell-interactions, exocytosis of secretory granules and regulation of signal transmission. Function is isoform-specific. Alpha-type isoforms have a long N-terminus with six laminin G-like domains and play an important role in synaptic signal transmission. Alpha-type isoforms play a role in the regulation of calcium channel activity and Ca(2+)-triggered neurotransmitter release at synapses and at neuromuscular junctions. They play an important role in Ca(2+)-triggered exocytosis of secretory granules in pituitary gland. They may affect their functions at synapses and in endocrine cells via their interactions with proteins from the exocytotic machinery. Likewise, alpha-type isoforms play a role in regulating the activity of postsynaptic NMDA receptors, a subtype of glutamate-gated ion channels. Both alpha-type and beta-type isoforms may play a role in the formation or maintenance of synaptic junctions via their interactions (via the extracellular domains) with neuroligin family members, CBLN1 or CBLN2. In vitro, triggers the de novo formation of presynaptic structures. May be involved in specification of excitatory synapses. Alpha-type isoforms were first identified as receptors for alpha-latrotoxin from spider venom. This Mus musculus (Mouse) protein is Neurexin-1 (Nrxn1).